A 299-amino-acid chain; its full sequence is MTLSFHYNRNDTKIMDIIVISGPTASGKTKKAVEFCKEKNGEIISCDSRQIYKYLDTGTNKEGVFLQNGLRRIDGVLQHLTDILNPDQNYSAAKFVKDADLKISEILKKGKVPVVTGGTGLYIKALLYGLDEMPKADKTLRKELKTKSQDELYSVLLKSDPEAAEKNKKNPQRLLRALEVNILSGRTMQEHFKSKSPRYNFGHYSISVDNKILYKKTNERCKYMIESGMIEETQKVLNMGFDKNCSALSGIGYRHIIQYLEKKISKEDLILEFSKDTRHYAKRQNTWFKAQPDVDFMFY.

22-29 (GPTASGKT) lines the ATP pocket. Residue 24-29 (TASGKT) participates in substrate binding. Interaction with substrate tRNA stretches follow at residues 47 to 50 (DSRQ) and 172 to 176 (QRLLR).

It belongs to the IPP transferase family. As to quaternary structure, monomer. Requires Mg(2+) as cofactor.

The catalysed reaction is adenosine(37) in tRNA + dimethylallyl diphosphate = N(6)-dimethylallyladenosine(37) in tRNA + diphosphate. Its function is as follows. Catalyzes the transfer of a dimethylallyl group onto the adenine at position 37 in tRNAs that read codons beginning with uridine, leading to the formation of N6-(dimethylallyl)adenosine (i(6)A). The polypeptide is tRNA dimethylallyltransferase (Endomicrobium trichonymphae).